Reading from the N-terminus, the 305-residue chain is Homoserine O-acetyltransferase (305 aa).

Cys142 serves as the catalytic Acyl-thioester intermediate. Positions 163 and 192 each coordinate substrate. His235 acts as the Proton acceptor in catalysis. Glu237 is a catalytic residue. Arg249 serves as a coordination point for substrate.

It belongs to the MetA family.

It is found in the cytoplasm. It catalyses the reaction L-homoserine + acetyl-CoA = O-acetyl-L-homoserine + CoA. It functions in the pathway amino-acid biosynthesis; L-methionine biosynthesis via de novo pathway; O-acetyl-L-homoserine from L-homoserine: step 1/1. Its function is as follows. Transfers an acetyl group from acetyl-CoA to L-homoserine, forming acetyl-L-homoserine. The polypeptide is Homoserine O-acetyltransferase (Cereibacter sphaeroides (strain ATCC 17025 / ATH 2.4.3) (Rhodobacter sphaeroides)).